A 372-amino-acid chain; its full sequence is tRNA-specific 2-thiouridylase MnmA (372 aa).

ATP-binding positions include 16-23 (GMSGGVDS) and Met-42. The interaction with target base in tRNA stretch occupies residues 102–104 (NPD). Cys-107 serves as the catalytic Nucleophile. Cys-107 and Cys-205 are oxidised to a cystine. Gly-132 contacts ATP. The segment at 155 to 157 (KDQ) is interaction with tRNA. Catalysis depends on Cys-205, which acts as the Cysteine persulfide intermediate. The interval 317–318 (RY) is interaction with tRNA.

This sequence belongs to the MnmA/TRMU family.

It is found in the cytoplasm. The catalysed reaction is S-sulfanyl-L-cysteinyl-[protein] + uridine(34) in tRNA + AH2 + ATP = 2-thiouridine(34) in tRNA + L-cysteinyl-[protein] + A + AMP + diphosphate + H(+). In terms of biological role, catalyzes the 2-thiolation of uridine at the wobble position (U34) of tRNA, leading to the formation of s(2)U34. This is tRNA-specific 2-thiouridylase MnmA from Shewanella baltica (strain OS195).